Consider the following 401-residue polypeptide: 4-hydroxy-3-methylbut-2-enyl diphosphate reductase (401 aa).

A [4Fe-4S] cluster-binding site is contributed by Cys66. Residue His96 participates in (2E)-4-hydroxy-3-methylbut-2-enyl diphosphate binding. His96 serves as a coordination point for dimethylallyl diphosphate. His96 is an isopentenyl diphosphate binding site. Cys157 is a [4Fe-4S] cluster binding site. (2E)-4-hydroxy-3-methylbut-2-enyl diphosphate is bound at residue His185. A dimethylallyl diphosphate-binding site is contributed by His185. An isopentenyl diphosphate-binding site is contributed by His185. Residue Glu187 is the Proton donor of the active site. Thr250 serves as a coordination point for (2E)-4-hydroxy-3-methylbut-2-enyl diphosphate. Residue Cys288 participates in [4Fe-4S] cluster binding. 4 residues coordinate (2E)-4-hydroxy-3-methylbut-2-enyl diphosphate: Ser317, Ser318, Asn319, and Ser381. The dimethylallyl diphosphate site is built by Ser317, Ser318, Asn319, and Ser381. Residues Ser317, Ser318, Asn319, and Ser381 each contribute to the isopentenyl diphosphate site.

This sequence belongs to the IspH family. [4Fe-4S] cluster serves as cofactor.

It catalyses the reaction isopentenyl diphosphate + 2 oxidized [2Fe-2S]-[ferredoxin] + H2O = (2E)-4-hydroxy-3-methylbut-2-enyl diphosphate + 2 reduced [2Fe-2S]-[ferredoxin] + 2 H(+). The enzyme catalyses dimethylallyl diphosphate + 2 oxidized [2Fe-2S]-[ferredoxin] + H2O = (2E)-4-hydroxy-3-methylbut-2-enyl diphosphate + 2 reduced [2Fe-2S]-[ferredoxin] + 2 H(+). The protein operates within isoprenoid biosynthesis; dimethylallyl diphosphate biosynthesis; dimethylallyl diphosphate from (2E)-4-hydroxy-3-methylbutenyl diphosphate: step 1/1. It participates in isoprenoid biosynthesis; isopentenyl diphosphate biosynthesis via DXP pathway; isopentenyl diphosphate from 1-deoxy-D-xylulose 5-phosphate: step 6/6. In terms of biological role, catalyzes the conversion of 1-hydroxy-2-methyl-2-(E)-butenyl 4-diphosphate (HMBPP) into a mixture of isopentenyl diphosphate (IPP) and dimethylallyl diphosphate (DMAPP). Acts in the terminal step of the DOXP/MEP pathway for isoprenoid precursor biosynthesis. This chain is 4-hydroxy-3-methylbut-2-enyl diphosphate reductase, found in Prochlorococcus marinus (strain NATL1A).